A 1137-amino-acid polypeptide reads, in one-letter code: Calcium-activated potassium channel subunit alpha-1 (1137 aa).

The Extracellular segment spans residues 1-44 (MSNNINANNLNTDSSSSPVNVPKMDALIIPVTMEVPCDSRGQRM). A helical membrane pass occupies residues 45-65 (WWAFLASSMVTFFGGLFIILL). Topologically, residues 66-137 (WRTLKYLWTV…MISAQTLTGR (72 aa)) are cytoplasmic. Residues 138-158 (VLVVLVFALSIGALVIYFIDS) traverse the membrane as a helical segment. Topologically, residues 159-173 (SNPIESCQNFYKDFT) are extracellular. A helical transmembrane segment spans residues 174–194 (LQIDMAFNVFFLLYFGLRFIA). Residues 195 to 198 (ANDK) are Cytoplasmic-facing. The helical transmembrane segment at 199 to 219 (LWFWLEVNSVVDFFTVPPVFV) threads the bilayer. At 220–223 (SVYL) the chain is on the extracellular side. The helical; Voltage-sensor transmembrane segment at 224–244 (NRSWLGLRFLRALRLIQFSEI) threads the bilayer. Residues 245 to 259 (LQFLNILKTSNSIKL) lie on the Cytoplasmic side of the membrane. A helical transmembrane segment spans residues 260–280 (VNLCSIFISTWLTAAGFIHLV). Topologically, residues 281-294 (ENSGDPWENFQNNQ) are extracellular. Residues 295 to 317 (QLTYWECVYLLMVTMSTVGYGDV) constitute an intramembrane region (pore-forming). The Selectivity for potassium motif lies at 311–314 (TVGY). The Extracellular portion of the chain corresponds to 318 to 326 (YAKTTLGRL). A helical transmembrane segment spans residues 327–347 (FMVFFILGGLAMFASYVPEII). Residues 348–1137 (ELIGNRKKYG…KQKYVQEDRL (790 aa)) are Cytoplasmic-facing. An RCK N-terminal 1 domain is found at 366–508 (RKHIVVCGHI…WNWKEGDDAI (143 aa)). The Mg(2+) site is built by Glu398, Gln421, and Glu423. The tract at residues 515 to 535 (LGFIAQSCLAPGLSTMLANLF) is segment S7. Residues 572–592 (LSFPAVCELVFAKLKLLMIAI) form a segment S8 region. Positions 636–640 (CKACH) are heme-binding motif. Residues 660-688 (EQPSTLSPKKKQRNGGMRNSPNSSPKLMR) are disordered. The tract at residues 738-758 (VLSGHVVVCIFGDVKSALIGL) is segment S9. The RCK N-terminal 2 domain occupies 740 to 884 (SGHVVVCIFG…MDRSSPDNSP (145 aa)). The Calcium bowl motif lies at 904-926 (TELVNDSNVQFLDQDDDDDPDTE). Ca(2+) contacts are provided by Gln913, Asp916, Asp919, and Asp921. Residues 933–953 (FACGTAFAVSVLDSLMSATYF) form a segment S10 region. Low complexity predominate over residues 1088-1112 (ASLSHSSHSSYSSSKKSSSVHSIPS). The interval 1088–1137 (ASLSHSSHSSYSSSKKSSSVHSIPSTANRPNRTKTRDSREKQKYVQEDRL) is disordered. The span at 1121–1137 (KTRDSREKQKYVQEDRL) shows a compositional bias: basic and acidic residues.

It belongs to the potassium channel family. Calcium-activated (TC 1.A.1.3) subfamily. KCa1.1/KCNMA1 sub-subfamily. Homotetramer; which constitutes the calcium-activated potassium channel.

It is found in the cell membrane. The catalysed reaction is K(+)(in) = K(+)(out). Its activity is regulated as follows. Ethanol and carbon monoxide-bound heme increase channel activation. Heme inhibits channel activation. In terms of biological role, potassium channel activated by both membrane depolarization or increase in cytosolic Ca(2+) that mediates export of K(+). It is also activated by the concentration of cytosolic Mg(2+). Its activation dampens the excitatory events that elevate the cytosolic Ca(2+) concentration and/or depolarize the cell membrane. It therefore contributes to repolarization of the membrane potential. Plays a key role in controlling excitability in a number of systems, such as regulation of the contraction of smooth muscle, the tuning of hair cells in the cochlea, regulation of transmitter release, and innate immunity. In smooth muscles, its activation by high level of Ca(2+), caused by ryanodine receptors in the sarcoplasmic reticulum, regulates the membrane potential. In cochlea cells, its number and kinetic properties partly determine the characteristic frequency of each hair cell and thereby helps to establish a tonotopic map. Highly sensitive to both iberiotoxin (IbTx) and charybdotoxin (CTX). This chain is Calcium-activated potassium channel subunit alpha-1 (KCNMA1), found in Gallus gallus (Chicken).